Reading from the N-terminus, the 168-residue chain is Photosystem I assembly protein Ycf3 (168 aa).

TPR repeat units lie at residues 35 to 68 (AFTYYRDGMSAQSEGNYAEALQNYYEAMRLEIDP), 72 to 105 (SYILYNIGLIHTSNGEHMKALEYYFRALERNPFL), and 120 to 153 (GEKAIQQGDSEIAEAWFDQAAEYWKQALALTPGN).

This sequence belongs to the Ycf3 family.

The protein localises to the plastid membrane. Essential for the assembly of the photosystem I (PSI) complex. May act as a chaperone-like factor to guide the assembly of the PSI subunits. The polypeptide is Photosystem I assembly protein Ycf3 (Cuscuta exaltata (Tall dodder)).